A 481-amino-acid chain; its full sequence is 6-phosphogluconate dehydrogenase, decarboxylating (481 aa).

NADP(+)-binding positions include 11–16, 34–36, 76–78, and asparagine 104; these read GLAVMG, NRT, and VKA. Residues asparagine 104 and 130–132 contribute to the substrate site; that span reads SGG. Lysine 184 acts as the Proton acceptor in catalysis. Residue 187–188 participates in substrate binding; sequence HN. Glutamate 191 acts as the Proton donor in catalysis. Substrate is bound by residues tyrosine 192, lysine 259, arginine 286, arginine 445, and histidine 451.

The protein belongs to the 6-phosphogluconate dehydrogenase family. As to quaternary structure, homodimer.

It catalyses the reaction 6-phospho-D-gluconate + NADP(+) = D-ribulose 5-phosphate + CO2 + NADPH. It functions in the pathway carbohydrate degradation; pentose phosphate pathway; D-ribulose 5-phosphate from D-glucose 6-phosphate (oxidative stage): step 3/3. Catalyzes the oxidative decarboxylation of 6-phosphogluconate to ribulose 5-phosphate and CO(2), with concomitant reduction of NADP to NADPH. This chain is 6-phosphogluconate dehydrogenase, decarboxylating (Pgd), found in Drosophila melanogaster (Fruit fly).